The chain runs to 365 residues: Probable dual-specificity RNA methyltransferase RlmN (365 aa).

E106 serves as the catalytic Proton acceptor. One can recognise a Radical SAM core domain in the interval 112-352 (YPDRVTLCVS…VTVRDTRGRE (241 aa)). Cysteines 119 and 357 form a disulfide. [4Fe-4S] cluster-binding residues include C126, C130, and C133. S-adenosyl-L-methionine-binding positions include 181–182 (GE), S215, 238–240 (SLH), and N314. C357 acts as the S-methylcysteine intermediate in catalysis.

The protein belongs to the radical SAM superfamily. RlmN family. The cofactor is [4Fe-4S] cluster.

It localises to the cytoplasm. It catalyses the reaction adenosine(2503) in 23S rRNA + 2 reduced [2Fe-2S]-[ferredoxin] + 2 S-adenosyl-L-methionine = 2-methyladenosine(2503) in 23S rRNA + 5'-deoxyadenosine + L-methionine + 2 oxidized [2Fe-2S]-[ferredoxin] + S-adenosyl-L-homocysteine. The enzyme catalyses adenosine(37) in tRNA + 2 reduced [2Fe-2S]-[ferredoxin] + 2 S-adenosyl-L-methionine = 2-methyladenosine(37) in tRNA + 5'-deoxyadenosine + L-methionine + 2 oxidized [2Fe-2S]-[ferredoxin] + S-adenosyl-L-homocysteine. Specifically methylates position 2 of adenine 2503 in 23S rRNA and position 2 of adenine 37 in tRNAs. The protein is Probable dual-specificity RNA methyltransferase RlmN of Thermobifida fusca (strain YX).